The sequence spans 1463 residues: Chitin binding domain (ChtBD2) containing chtb-1 (1463 aa).

Residues Met1–Gly17 form the signal peptide. The segment at Ser70–Gln99 is disordered. The 71-residue stretch at Pro94 to Ser164 folds into the Chitin-binding type-2 domain. Residues Cys141 and Cys154 are joined by a disulfide bond. 2 disordered regions span residues Ile720–Ile773 and Lys841–Ser869. The segment covering Ser722–Glu734 has biased composition (polar residues). 2 stretches are compositionally biased toward basic residues: residues Asn740–Lys756 and Pro843–Gln853.

In Caenorhabditis elegans, this protein is Chitin binding domain (ChtBD2) containing chtb-1.